A 136-amino-acid polypeptide reads, in one-letter code: Large ribosomal subunit protein uL16 (136 aa).

Belongs to the universal ribosomal protein uL16 family. In terms of assembly, part of the 50S ribosomal subunit.

In terms of biological role, binds 23S rRNA and is also seen to make contacts with the A and possibly P site tRNAs. This is Large ribosomal subunit protein uL16 from Aliivibrio salmonicida (strain LFI1238) (Vibrio salmonicida (strain LFI1238)).